Here is a 610-residue protein sequence, read N- to C-terminus: ATP-dependent zinc metalloprotease FtsH (610 aa).

At 1 to 5 the chain is on the cytoplasmic side; the sequence is MNRSN. The helical transmembrane segment at 6–26 threads the bilayer; the sequence is IWNLLFTILIIVTLFWLARFF. Residues 27-107 are Periplasmic-facing; it reads YVENSPVSKL…SGERSGSSSF (81 aa). Residues 108–128 traverse the membrane as a helical segment; that stretch reads WINVLGTLIPTILFIVVWLFI. Over 129-610 the chain is Cytoplasmic; sequence MRSLSGRNNQ…LSEEFEKVVE (482 aa). Residues Gly-164, 204–208, Leu-209, His-343, and Glu-371 each bind ATP; that span reads GTGKT. His-423 lines the Zn(2+) pocket. Residue Glu-424 is part of the active site. Positions 427 and 500 each coordinate Zn(2+).

It in the central section; belongs to the AAA ATPase family. In the C-terminal section; belongs to the peptidase M41 family. The isolated ADP-bound cytosolic domain forms a 6-fold symmetric protease disk and a 2-fold symmetric AAA ATPase ring. In the absence of nucleotide the AAA ATPase ring also forms symmetric hexamers. Zn(2+) serves as cofactor.

Its subcellular location is the cell inner membrane. Acts as a processive, ATP-dependent zinc metallopeptidase for both cytoplasmic and membrane proteins. Plays a role in the quality control of integral membrane proteins. In Thermotoga maritima (strain ATCC 43589 / DSM 3109 / JCM 10099 / NBRC 100826 / MSB8), this protein is ATP-dependent zinc metalloprotease FtsH.